A 131-amino-acid chain; its full sequence is Large ribosomal subunit protein bL17 (131 aa).

Belongs to the bacterial ribosomal protein bL17 family. Part of the 50S ribosomal subunit. Contacts protein L32.

This is Large ribosomal subunit protein bL17 from Finegoldia magna (strain ATCC 29328 / DSM 20472 / WAL 2508) (Peptostreptococcus magnus).